The sequence spans 497 residues: Maintenance of mitochondrial morphology protein 1 (497 aa).

The Lumenal segment spans residues M1–P28. Residues T29–F55 form a helical membrane-spanning segment. Residues G56–T497 are Cytoplasmic-facing. Disordered stretches follow at residues P60–T107, E284–G330, T402–V421, and E437–T497. The segment covering Q66–Y77 has biased composition (basic residues). The span at G81 to P94 shows a compositional bias: basic and acidic residues. Polar residues-rich tracts occupy residues S95–T107, E284–S302, and P311–G330. An SMP-LTD domain is found at Q140–P393. The segment covering D412 to V421 has biased composition (low complexity). A compositionally biased stretch (basic and acidic residues) spans H440–R451. Residues G462–S473 show a composition bias toward polar residues. Residues S474–F484 show a composition bias toward basic and acidic residues.

This sequence belongs to the MMM1 family. Homodimer. Component of the ER-mitochondria encounter structure (ERMES) or MDM complex, composed of MMM1, MDM10, MDM12 and MDM34. An MMM1 homodimer associates with one molecule of MDM12 on each side in a pairwise head-to-tail manner, and the SMP-LTD domains of MMM1 and MDM12 generate a continuous hydrophobic tunnel for phospholipid trafficking.

It localises to the endoplasmic reticulum membrane. Its function is as follows. Component of the ERMES/MDM complex, which serves as a molecular tether to connect the endoplasmic reticulum (ER) and mitochondria. Components of this complex are involved in the control of mitochondrial shape and protein biogenesis, and function in nonvesicular lipid trafficking between the ER and mitochondria. The MDM12-MMM1 subcomplex functions in the major beta-barrel assembly pathway that is responsible for biogenesis of all outer membrane beta-barrel proteins, and acts in a late step after the SAM complex. The MDM10-MDM12-MMM1 subcomplex further acts in the TOM40-specific pathway after the action of the MDM12-MMM1 complex. Essential for establishing and maintaining the structure of mitochondria and maintenance of mtDNA nucleoids. This is Maintenance of mitochondrial morphology protein 1 from Uncinocarpus reesii (strain UAMH 1704).